The following is a 408-amino-acid chain: Collagen and calcium-binding EGF domain-containing protein 1 (408 aa).

The signal sequence occupies residues 1–35 (MVPPPLPSRGGAAKRQLGKSLGPLLLLLALGHTWT). One can recognise an EGF-like; calcium-binding domain in the interval 135 to 176 (DIDECATSNTTLCAHICINTMGSYHCECREGYILEDDGRTCT). 3 disulfide bridges follow: cysteine 139-cysteine 151, cysteine 147-cysteine 160, and cysteine 162-cysteine 175. Asparagine 143 carries N-linked (GlcNAc...) asparagine glycosylation. Asparagine 183 carries N-linked (GlcNAc...) asparagine glycosylation. 2 disordered regions span residues 246–335 (YLPG…GPPG) and 361–408 (HRTH…NFYP). 2 Collagen-like domains span residues 247–292 (LPGP…PMGP) and 302–335 (GRRG…GPPG). Residues 272–281 (PGMPGPPGQP) show a composition bias toward pro residues. Positions 283-294 (PRGSMGPMGPSP) are enriched in low complexity. Positions 325 to 334 (PGPPGSPGPP) are enriched in pro residues. O-linked (Xyl...) (chondroitin sulfate) serine glycosylation occurs at serine 387. The span at 390–402 (DYSRRTEARDPEA) shows a compositional bias: basic and acidic residues.

Belongs to the CCBE1 family.

It is found in the secreted. Required for lymphangioblast budding and angiogenic sprouting from venous endothelium during embryogenesis. The protein is Collagen and calcium-binding EGF domain-containing protein 1 (Ccbe1) of Mus musculus (Mouse).